Consider the following 727-residue polypeptide: MEDSYKDRTSLMKGAKDIAKEVKKQTVKKVNQAVDRAQDEYTQRSYSRFQDEDDDDDYYPPGETYSGEANDDEGSSEATEGHDEEDEIYEGEYQGIPSTNQGKDSIVSVGQPKGDEYKDRRELESERRADEEELAQQYELIIQECGHGRFQWALFFVLGMALMADGVEVFVVGFVLPSAETDLCIPNSGSGWLGSIVYLGMMVGAFFWGGLADKVGRKQSLLICMSVNGFFAFLSSFVQGYGFFLLCRLLSGFGIGGAIPTVFSYFAEVLAREKRGEHLSWLCMFWMIGGIYASAMAWAIIPHYGWSFSMGSAYQFHSWRVFVIVCALPCVSSVVALTFMPESPRFLLEVGKHDEAWMILKLIHDTNMRARGQPEKVFTVNKIKTPKQIDELIEIESDTGTWYRRCFVRIRTELYGIWLTFMRCFNYPVRENTIKLTIVWFTLSFGYYGLSVWFPDVIKHLQSDEYALLTRNVQKDKYANFSINFTMENQVHTGMEYDNGRFLGVKFKSVTFKDSVFKSCTFDDVTSVNTYFKNCTFIDTLFENTDFEPYKFIDSEFQNCSFLHNKTGCQITFDDDYSAYWIYFVNFLGTLAVLPGNIVSALLMDRIGRLTMLGGSMVLSGISCFFLWFGTSESMMIGMLCLYNGLTISAWNSLDVVTVELYPTDRRATGFGFLNALCKAAAVLGNLIFGSLVSITKAIPILLASTVLVCGGLVGLRLPDTRTQVLM.

Residues 1–57 (MEDSYKDRTSLMKGAKDIAKEVKKQTVKKVNQAVDRAQDEYTQRSYSRFQDEDDDDD) form an interaction with SYT1 region. Topologically, residues 1-154 (MEDSYKDRTS…CGHGRFQWAL (154 aa)) are cytoplasmic. The segment at 22–120 (VKKQTVKKVN…QPKGDEYKDR (99 aa)) is disordered. S75 and S76 each carry phosphoserine. A Phosphothreonine modification is found at T79. A helical transmembrane segment spans residues 155-175 (FFVLGMALMADGVEVFVVGFV). Residues 176 to 191 (LPSAETDLCIPNSGSG) lie on the Extracellular side of the membrane. A helical membrane pass occupies residues 192–212 (WLGSIVYLGMMVGAFFWGGLA). The Cytoplasmic portion of the chain corresponds to 213–226 (DKVGRKQSLLICMS). The helical transmembrane segment at 227–247 (VNGFFAFLSSFVQGYGFFLLC) threads the bilayer. Position 248 (R248) is a topological domain, extracellular. Residues 249–269 (LLSGFGIGGAIPTVFSYFAEV) traverse the membrane as a helical segment. Topologically, residues 270–280 (LAREKRGEHLS) are cytoplasmic. The helical transmembrane segment at 281–301 (WLCMFWMIGGIYASAMAWAII) threads the bilayer. The Extracellular portion of the chain corresponds to 302–320 (PHYGWSFSMGSAYQFHSWR). The chain crosses the membrane as a helical span at residues 321–341 (VFVIVCALPCVSSVVALTFMP). The Cytoplasmic portion of the chain corresponds to 342 to 437 (ESPRFLLEVG…PVRENTIKLT (96 aa)). Residues 438 to 458 (IVWFTLSFGYYGLSVWFPDVI) form a helical membrane-spanning segment. Topologically, residues 459 to 578 (KHLQSDEYAL…CQITFDDDYS (120 aa)) are extracellular. Y466 carries the post-translational modification Phosphotyrosine. 5 N-linked (GlcNAc...) asparagine glycosylation sites follow: N480, N484, N534, N559, and N565. A (Microbial infection) C.botulinum neurotoxin type A-binding region spans residues 529-566 (NTYFKNCTFIDTLFENTDFEPYKFIDSEFQNCSFLHNK). A helical transmembrane segment spans residues 579-599 (AYWIYFVNFLGTLAVLPGNIV). Residues 600–609 (SALLMDRIGR) are Cytoplasmic-facing. A helical membrane pass occupies residues 610–630 (LTMLGGSMVLSGISCFFLWFG). Residues 631 to 636 (TSESMM) lie on the Extracellular side of the membrane. The helical transmembrane segment at 637–657 (IGMLCLYNGLTISAWNSLDVV) threads the bilayer. The Cytoplasmic segment spans residues 658–670 (TVELYPTDRRATG). The chain crosses the membrane as a helical span at residues 671–693 (FGFLNALCKAAAVLGNLIFGSLV). At 694–697 (SITK) the chain is on the extracellular side. Residues 698-716 (AIPILLASTVLVCGGLVGL) form a helical membrane-spanning segment. Residues 717–727 (RLPDTRTQVLM) are Cytoplasmic-facing.

Belongs to the major facilitator superfamily. In terms of assembly, interacts with SYT1 in a calcium-dependent manner. (Microbial infection) Interacts with C.botulinum neurotoxin type A (BoNT/A, botA). As to quaternary structure, (Microbial infection) Interacts with C.botulinum neurotoxin type F (BoNT/F). Interaction requires glycosylation of SV2 proteins. N-glycosylated. As to expression, expressed at high levels in very few brain areas including the striatum, midbrain and hindbrain, and in the olfactory bulb. Expressed at lower levels in cerebrum, hippocampus and cerebellum (at protein level). Mainly expressed in brain; also detected in lung, liver, kidney.

Its subcellular location is the cytoplasmic vesicle. The protein resides in the secretory vesicle. It localises to the synaptic vesicle membrane. Functionally, plays a role in the control of regulated secretion in neural and endocrine cells, enhancing selectively low-frequency neurotransmission. Positively regulates vesicle fusion by maintaining the readily releasable pool of secretory vesicles. Its function is as follows. (Microbial infection) Receptor for C.botulinum neurotoxin type A (BoNT/A, botA); the toxin binds Sv2c via extracellular loop 4. Restores uptake of BoNT/A in rat cells that are deleted for SV2 receptor. (Microbial infection) Possible receptor for C.botulinum neurotoxin type D (BoNT/D, botD); BoNT/D does not bind to extracellular loop 4 as do BoNT/A and BoNT/E. Another group does not find a convincing interaction with SV2. In terms of biological role, (Microbial infection) Receptor for C.botulinum neurotoxin type F (BoNT/F); binding requires glycosylation of Asn-573. The chain is Synaptic vesicle glycoprotein 2C (Sv2c) from Rattus norvegicus (Rat).